Reading from the N-terminus, the 275-residue chain is Transmembrane protein 45A (275 aa).

The next 5 helical transmembrane spans lie at 7-27 (HALP…KSIL), 51-71 (ILEG…EQFI), 100-120 (FFFG…SLPV), 150-170 (IFVH…AFLE), and 218-238 (ILFL…IVGM).

This sequence belongs to the TMEM45 family.

The protein localises to the membrane. This chain is Transmembrane protein 45A (TMEM45A), found in Homo sapiens (Human).